A 424-amino-acid chain; its full sequence is GTPase Obg (424 aa).

Residues 1–158 enclose the Obg domain; the sequence is MFVDRAEVFV…RYISLELKIL (158 aa). Residues 21–42 form a disordered region; sequence SFRREKYVPRGGPDGGDGGKGG. Gly residues predominate over residues 32-42; that stretch reads GPDGGDGGKGG. Positions 159-331 constitute an OBG-type G domain; it reads ADVGLLGFPN…LMKEAAAMLT (173 aa). Residues 165–172, 190–194, 212–215, 282–285, and 312–314 contribute to the GTP site; these read GFPNVGKS, FTTLS, DIPG, NKAD, and SAA. The Mg(2+) site is built by Ser172 and Thr192. Residues 345–424 form the OCT domain; the sequence is KFIPEEKRFT…LNDFEFDYIL (80 aa).

It belongs to the TRAFAC class OBG-HflX-like GTPase superfamily. OBG GTPase family. As to quaternary structure, monomer. The cofactor is Mg(2+).

It localises to the cytoplasm. In terms of biological role, an essential GTPase which binds GTP, GDP and possibly (p)ppGpp with moderate affinity, with high nucleotide exchange rates and a fairly low GTP hydrolysis rate. Plays a role in control of the cell cycle, stress response, ribosome biogenesis and in those bacteria that undergo differentiation, in morphogenesis control. The chain is GTPase Obg from Clostridium kluyveri (strain NBRC 12016).